Consider the following 451-residue polypeptide: E3 ubiquitin-protein ligase trul-1 (451 aa).

Residues 13–54 form an RING-type; atypical zinc finger; that stretch reads CSICFEDLKQNDKISAIVCGHIYHHGCISQWIATKRQCPSCR. Coiled-coil stretches lie at residues 96 to 130 and 209 to 243; these read LKVE…EKDK and NKDL…DAAI. Disordered stretches follow at residues 270 to 297 and 389 to 442; these read RDVL…MIDP and KIPN…SSTS. A compositionally biased stretch (low complexity) spans 427–442; it reads STRISSFFSRTTSSTS.

The protein belongs to the TRAIP family.

It localises to the nucleus. Its subcellular location is the chromosome. The catalysed reaction is S-ubiquitinyl-[E2 ubiquitin-conjugating enzyme]-L-cysteine + [acceptor protein]-L-lysine = [E2 ubiquitin-conjugating enzyme]-L-cysteine + N(6)-ubiquitinyl-[acceptor protein]-L-lysine.. Its pathway is protein modification; protein ubiquitination. Its function is as follows. E3 ubiquitin ligase that acts as a key regulator of DNA repair in response to replication stress. Acts by mediating ubiquitination of the CMG helicase complex, promoting the unloading of the CMG helicase complex by the p97 ATPase (cdc-48.1 or cdc-48.2). The polypeptide is E3 ubiquitin-protein ligase trul-1 (Caenorhabditis elegans).